The chain runs to 351 residues: Phospho-N-acetylmuramoyl-pentapeptide-transferase (351 aa).

10 helical membrane passes run I22–W42, T65–T85, F87–I107, F128–D148, Y158–M178, G190–V210, L225–L245, V254–V274, L279–V299, and K328–I348.

This sequence belongs to the glycosyltransferase 4 family. MraY subfamily. Requires Mg(2+) as cofactor.

It localises to the cell inner membrane. It catalyses the reaction UDP-N-acetyl-alpha-D-muramoyl-L-alanyl-gamma-D-glutamyl-meso-2,6-diaminopimeloyl-D-alanyl-D-alanine + di-trans,octa-cis-undecaprenyl phosphate = di-trans,octa-cis-undecaprenyl diphospho-N-acetyl-alpha-D-muramoyl-L-alanyl-D-glutamyl-meso-2,6-diaminopimeloyl-D-alanyl-D-alanine + UMP. Its pathway is cell wall biogenesis; peptidoglycan biosynthesis. In terms of biological role, catalyzes the initial step of the lipid cycle reactions in the biosynthesis of the cell wall peptidoglycan: transfers peptidoglycan precursor phospho-MurNAc-pentapeptide from UDP-MurNAc-pentapeptide onto the lipid carrier undecaprenyl phosphate, yielding undecaprenyl-pyrophosphoryl-MurNAc-pentapeptide, known as lipid I. This is Phospho-N-acetylmuramoyl-pentapeptide-transferase from Nautilia profundicola (strain ATCC BAA-1463 / DSM 18972 / AmH).